We begin with the raw amino-acid sequence, 2201 residues long: RNA-directed RNA polymerase L (2201 aa).

Residues 26-285 form an endonuclease region; it reads KNIMLAQTQI…VCSKSVEYTF (260 aa). Mn(2+) contacts are provided by glutamate 51, aspartate 88, and glutamate 101. Lysine 114 is a catalytic residue. Positions 1156-1352 constitute a RdRp catalytic domain; sequence LDMKSVVRQS…FLSDRLNKFV (197 aa). Aspartate 1312 provides a ligand contact to Mg(2+).

The protein belongs to the Bunyavirales RNA polymerase family. As to quaternary structure, homomultimer; the oligomeric structure is essential for the polymerase activity. Interacts with nucleoprotein N. Interacts with protein Z; this interaction inhibits viral transcription and replication, Z partially blocks the product exit tunnel for the releasing nascent RNA product. Mn(2+) is required as a cofactor. Requires Mg(2+) as cofactor.

Its subcellular location is the virion. It localises to the host cytoplasm. It carries out the reaction RNA(n) + a ribonucleoside 5'-triphosphate = RNA(n+1) + diphosphate. Functionally, RNA-dependent RNA polymerase, which is responsible for the replication and transcription of the viral RNA genome using antigenomic RNA as an intermediate. During transcription, synthesizes subgenomic RNAs and assures their capping by a cap-snatching mechanism, which involves the endonuclease activity cleaving the host capped pre-mRNAs. These short capped RNAs are then used as primers for viral transcription. The 3'-end of subgenomic mRNAs molecules are heterogeneous and not polyadenylated. The replicase function is to direct synthesis of antigenomic and genomic RNA which are encapsidated and non capped. As a consequence of the use of the same enzyme for both transcription and replication, these mechanisms need to be well coordinated. These processes may be regulated by proteins N and Z in a dose-dependent manner. Z protein inhibits the viral polymerase L und thus the viral transcription and RNA synthesis. The polypeptide is RNA-directed RNA polymerase L (Oecomys bicolor (Bicolored arboreal rice rat)).